We begin with the raw amino-acid sequence, 436 residues long: 5-hydroxytryptamine receptor 6 (436 aa).

The Extracellular segment spans residues 1–27 (MVPEPGPVNSSTPAWGPGPPPAPGGSG). Asparagine 9 carries an N-linked (GlcNAc...) asparagine glycan. A helical membrane pass occupies residues 28 to 52 (WVAAALCVVIVLTAAANSLLIVLIC). The Cytoplasmic portion of the chain corresponds to 53–62 (TQPALRNTSN). Residues 63-88 (FFLVSLFTSDLMVGLVVMPPAMLNAL) form a helical membrane-spanning segment. Over 89–96 (YGRWVLAR) the chain is Extracellular. The helical transmembrane segment at 97–122 (GLCLLWTAFDVMCCSASILNLCLISL) threads the bilayer. Cysteine 99 and cysteine 180 are disulfide-bonded. Residue aspartate 106 coordinates serotonin. Residues 123–142 (DRYLLILSPLRYKLRMTAPR) lie on the Cytoplasmic side of the membrane. The chain crosses the membrane as a helical span at residues 143–167 (ALALILGAWSLAALASFLPLLLGWH). Residues 168-185 (ELGKARTPAPGQCRLLAS) lie on the Extracellular side of the membrane. The helical transmembrane segment at 186 to 209 (LPFVLVASGVTFFLPSGAICFTYC) threads the bilayer. The Cytoplasmic portion of the chain corresponds to 210–266 (RILLAARKQAVQVASLTTGTAGQALETLQVPRTPRPGMESADSRRLATKHSRKALKA). The chain crosses the membrane as a helical span at residues 267 to 293 (SLTLGILLGMFFVTWLPFFVANIAQAV). Position 288 (asparagine 288) interacts with serotonin. Over 294 to 299 (CDCISP) the chain is Extracellular. The helical transmembrane segment at 300–323 (GLFDVLTWLGYCNSTMNPIIYPLF) threads the bilayer. Topologically, residues 324–436 (MRDFKRALGR…RYGRIHSVPP (113 aa)) are cytoplasmic.

It belongs to the G-protein coupled receptor 1 family. As to quaternary structure, interacts with MTOR, RPTOR and NF1. Interacts with CDK5. As to expression, localized exclusively in the central nervous system, predominantly in the corpus striatum but also in various limbic and cortical regions.

It is found in the cell membrane. In terms of biological role, G-protein coupled receptor for 5-hydroxytryptamine (serotonin), a biogenic hormone that functions as a neurotransmitter, a hormone and a mitogen. Also has a high affinity for tricyclic psychotropic drugs. Ligand binding causes a conformation change that triggers signaling via guanine nucleotide-binding proteins (G proteins) and modulates the activity of downstream effectors. HTR6 is coupled to G(s) G alpha proteins and mediates activation of adenylate cyclase activity. Controls pyramidal neurons migration during corticogenesis, through the regulation of CDK5 activity. Is an activator of mTOR signaling. In Rattus norvegicus (Rat), this protein is 5-hydroxytryptamine receptor 6 (Htr6).